We begin with the raw amino-acid sequence, 172 residues long: Scytalone dehydratase (172 aa).

Positions 30, 50, and 53 each coordinate substrate. Residues H85 and H110 contribute to the active site. Substrate is bound at residue N131.

This sequence belongs to the scytalone dehydratase family. In terms of assembly, homotrimer. Each subunit contains an active site, located in the central part of the hydrophobic core of the monomer, which functions independently.

It is found in the endosome. It catalyses the reaction scytalone = 1,3,8-trihydroxynaphthalene + H2O. The protein operates within pigment biosynthesis; melanin biosynthesis. Its activity is regulated as follows. (N-phenoxypropyl)-carboxamides such as carpropamid and derivatives of norephedrine act as inhibitors of scytalone dehydratase activity. Its function is as follows. Scytalone dehydratase; part of the gene cluster that mediates the biosynthesis of dihydroxynaphthalene melanin, a bluish-green pigment and a structural component of the conidial wall. Within the pathway, catalyzes the dehydration of scytalone as well as of vermelone. Is also able to dehydrate the alternate substrate 2,3-dihydro-2,5-dihydroxy-4H-benzopyran-4-one (DDBO) to 5-hydroxy-4H-1-benzopyran-4-one (HBO). This is Scytalone dehydratase (SDH1) from Pyricularia oryzae (strain 70-15 / ATCC MYA-4617 / FGSC 8958) (Rice blast fungus).